The chain runs to 142 residues: Large ribosomal subunit protein uL13 (142 aa).

Belongs to the universal ribosomal protein uL13 family. Part of the 50S ribosomal subunit.

Functionally, this protein is one of the early assembly proteins of the 50S ribosomal subunit, although it is not seen to bind rRNA by itself. It is important during the early stages of 50S assembly. The protein is Large ribosomal subunit protein uL13 of Pectobacterium atrosepticum (strain SCRI 1043 / ATCC BAA-672) (Erwinia carotovora subsp. atroseptica).